The primary structure comprises 454 residues: Allantoinase (454 aa).

Positions 60, 62, 147, 183, 239, and 312 each coordinate Zn(2+). An N6-carboxylysine modification is found at Lys147.

It belongs to the metallo-dependent hydrolases superfamily. Allantoinase family. Homotetramer. It depends on Zn(2+) as a cofactor. Post-translationally, carboxylation allows a single lysine to coordinate two zinc ions.

The catalysed reaction is (S)-allantoin + H2O = allantoate + H(+). The protein operates within nitrogen metabolism; (S)-allantoin degradation; allantoate from (S)-allantoin: step 1/1. Catalyzes the conversion of allantoin (5-ureidohydantoin) to allantoic acid by hydrolytic cleavage of the five-member hydantoin ring. This is Allantoinase from Bacillus velezensis (strain DSM 23117 / BGSC 10A6 / LMG 26770 / FZB42) (Bacillus amyloliquefaciens subsp. plantarum).